The sequence spans 35 residues: Cecropin-B (35 aa).

Leu-35 is modified (leucine amide).

It belongs to the cecropin family.

The protein resides in the secreted. Its function is as follows. Cecropins have lytic and antibacterial activity against several Gram-positive and Gram-negative bacteria. The polypeptide is Cecropin-B (Antheraea pernyi (Chinese oak silk moth)).